Reading from the N-terminus, the 208-residue chain is Ribosomal RNA large subunit methyltransferase E (208 aa).

5 residues coordinate S-adenosyl-L-methionine: glycine 62, tryptophan 64, aspartate 82, aspartate 98, and aspartate 123. Lysine 163 (proton acceptor) is an active-site residue.

This sequence belongs to the class I-like SAM-binding methyltransferase superfamily. RNA methyltransferase RlmE family.

The protein resides in the cytoplasm. The enzyme catalyses uridine(2552) in 23S rRNA + S-adenosyl-L-methionine = 2'-O-methyluridine(2552) in 23S rRNA + S-adenosyl-L-homocysteine + H(+). In terms of biological role, specifically methylates the uridine in position 2552 of 23S rRNA at the 2'-O position of the ribose in the fully assembled 50S ribosomal subunit. The polypeptide is Ribosomal RNA large subunit methyltransferase E (Actinobacillus succinogenes (strain ATCC 55618 / DSM 22257 / CCUG 43843 / 130Z)).